A 474-amino-acid polypeptide reads, in one-letter code: UDP-N-acetylmuramoyl-L-alanyl-D-glutamate--2,6-diaminopimelate ligase (474 aa).

Serine 21 contacts UDP-N-acetyl-alpha-D-muramoyl-L-alanyl-D-glutamate. Residue 93-99 coordinates ATP; the sequence is GTNGKSS. UDP-N-acetyl-alpha-D-muramoyl-L-alanyl-D-glutamate contacts are provided by residues 139–140, serine 166, glutamine 172, and arginine 174; that span reads TT. Lysine 206 is subject to N6-carboxylysine. Meso-2,6-diaminopimelate-binding positions include arginine 367, 391–394, glycine 441, and glutamate 445; that span reads DNPR. The Meso-diaminopimelate recognition motif signature appears at 391-394; sequence DNPR.

This sequence belongs to the MurCDEF family. MurE subfamily. It depends on Mg(2+) as a cofactor. Post-translationally, carboxylation is probably crucial for Mg(2+) binding and, consequently, for the gamma-phosphate positioning of ATP.

It is found in the cytoplasm. The catalysed reaction is UDP-N-acetyl-alpha-D-muramoyl-L-alanyl-D-glutamate + meso-2,6-diaminopimelate + ATP = UDP-N-acetyl-alpha-D-muramoyl-L-alanyl-gamma-D-glutamyl-meso-2,6-diaminopimelate + ADP + phosphate + H(+). It functions in the pathway cell wall biogenesis; peptidoglycan biosynthesis. In terms of biological role, catalyzes the addition of meso-diaminopimelic acid to the nucleotide precursor UDP-N-acetylmuramoyl-L-alanyl-D-glutamate (UMAG) in the biosynthesis of bacterial cell-wall peptidoglycan. This chain is UDP-N-acetylmuramoyl-L-alanyl-D-glutamate--2,6-diaminopimelate ligase, found in Rickettsia bellii (strain RML369-C).